Reading from the N-terminus, the 342-residue chain is Aldo-keto reductase pigE (342 aa).

The signal sequence occupies residues 1–27; sequence MGSISPKTRFPIVLGAGLIGSPGLFEG. Position 52 (Asp52) interacts with NADP(+). The Proton donor role is filled by Tyr57. 2 residues coordinate NADP(+): Gln182 and Arg236. Asn271 carries N-linked (GlcNAc...) asparagine glycosylation.

The protein belongs to the aldo/keto reductase family. Aldo/keto reductase 2 subfamily.

It participates in secondary metabolite biosynthesis. In terms of biological role, aldo-keto reductase; part of the gene cluster that mediates the biosynthesis of azaphilone pigments (MonAzPs), a complex mixture of compounds with a common azaphilone skeleton very widely used as food colorants. Within the pathway, pigE is involved in the dehydration of the C-11 alcohol followed by the reduction of the C6(7) double bond which increases the electrophilicity of the C-5 ketone of the resulting acyl benzopyran and allows the intramolecular Knoevenagel aldol condensation with the C-20 enol of the side chain to yield the characteristic linear tricyclic carbon skeletons of the yellow pigments. The first step of the pathway is performed by the nrPKS pigA that forms the hexaketide precursor from successive condensations of five malonyl-CoA units, with a simple acetyl-CoA starter unit. The role of esterase pigG is not clear, but it may play at most a supplementary role in the formation of the benzaldehyde produced by the pigA nrPKS. This very reactive benzaldehyde is intercepted by the pigC ketoreductase that to provide the first stable enzyme-free MonAzPs intermediate, 6-(4-hydroxy-2-oxopentyl)-3-methyl-2,4-dioxocyclohexane carbaldehyde, also known as M7PKS-1. The FAD-dependent monooxygenase pigN hydroxylates M7PKS-1 at C-4, which triggers the formation of the pyran ring. PigJ, pigK and pigD are involved in the acetylation of the pyran ring. PigJ and pigK form the two subunits of a dedicated fungal FAS that produces the side chain fatty acyl moiety of MonAzPs and pigD transfers the fatty acyl chain to the C-4 alcohol. PigM and pigO are involved in the elimination of the omega-1 alcohol. PigM acts as an O-acetyltransferase that synthesizes the putative O-11 acetyl intermediate whereas pigO eliminates acetic acid to yield an intermediate with a C10(11) double bond. The dehydration of the C-11 alcohol followed by the reduction of the C6(7) double bond by the NAD(P)H-dependent oxidoreductase pigE increases the electrophilicity of the C-5 ketone of the resulting acyl benzopyran. This in turn sets up the C-5 ketone for an intramolecular Knoevenagel aldol condensation with the C-20 enol of the side chain. This condensation affords the characteristic linear tricyclic carbon skeletons of the yellow pigments that serve as the common precursors for the classical yellow pigments monascin and ankaflavin, orange pigments rubopunctatin and monascorubrin, and red pigments ribropunctamine and monascorubramine. The FAD-dependent oxidoreductase pigF is especially invoved in the biosynthesis of orange and red pigments via desaturation of C6(7). The polypeptide is Aldo-keto reductase pigE (Monascus ruber (Mold)).